The sequence spans 188 residues: Probable nicotinate-nucleotide adenylyltransferase (188 aa).

Belongs to the NadD family.

It catalyses the reaction nicotinate beta-D-ribonucleotide + ATP + H(+) = deamido-NAD(+) + diphosphate. The protein operates within cofactor biosynthesis; NAD(+) biosynthesis; deamido-NAD(+) from nicotinate D-ribonucleotide: step 1/1. Catalyzes the reversible adenylation of nicotinate mononucleotide (NaMN) to nicotinic acid adenine dinucleotide (NaAD). This Listeria welshimeri serovar 6b (strain ATCC 35897 / DSM 20650 / CCUG 15529 / CIP 8149 / NCTC 11857 / SLCC 5334 / V8) protein is Probable nicotinate-nucleotide adenylyltransferase.